A 222-amino-acid polypeptide reads, in one-letter code: Eukaryotic translation initiation factor 3 subunit K (222 aa).

Residues 46–208 (YDLEANLAVL…KIKTKNITEK (163 aa)) enclose the PCI domain.

Belongs to the eIF-3 subunit K family. As to quaternary structure, component of the eukaryotic translation initiation factor 3 (eIF-3) complex. The eIF-3 complex interacts with pix.

Its subcellular location is the cytoplasm. Functionally, component of the eukaryotic translation initiation factor 3 (eIF-3) complex, which is involved in protein synthesis of a specialized repertoire of mRNAs and, together with other initiation factors, stimulates binding of mRNA and methionyl-tRNAi to the 40S ribosome. The eIF-3 complex specifically targets and initiates translation of a subset of mRNAs involved in cell proliferation. The sequence is that of Eukaryotic translation initiation factor 3 subunit K from Drosophila yakuba (Fruit fly).